Here is a 344-residue protein sequence, read N- to C-terminus: Uroporphyrinogen decarboxylase (344 aa).

Residues 23 to 27 (RQAGR), D73, Y149, T204, and H321 each bind substrate.

This sequence belongs to the uroporphyrinogen decarboxylase family. Homodimer.

It localises to the cytoplasm. The catalysed reaction is uroporphyrinogen III + 4 H(+) = coproporphyrinogen III + 4 CO2. The protein operates within porphyrin-containing compound metabolism; protoporphyrin-IX biosynthesis; coproporphyrinogen-III from 5-aminolevulinate: step 4/4. Its function is as follows. Catalyzes the decarboxylation of four acetate groups of uroporphyrinogen-III to yield coproporphyrinogen-III. The chain is Uroporphyrinogen decarboxylase from Francisella tularensis subsp. novicida (strain U112).